The chain runs to 376 residues: 1-acyl-sn-glycerol-3-phosphate acyltransferase 3 (376 aa).

The next 2 helical transmembrane spans lie at 14–34 (VLFL…FIIV) and 49–69 (VAEL…CIKI). An HXXXXD motif motif is present at residues 92–97 (HRSDID). 3 helical membrane-spanning segments follow: residues 98 to 118 (WLIG…LAIM), 306 to 326 (LIVV…LLQW), and 335 to 355 (IILL…ILIQ).

It belongs to the 1-acyl-sn-glycerol-3-phosphate acyltransferase family. As to expression, predominantly expressed in pollen.

The protein resides in the membrane. The catalysed reaction is a 1-acyl-sn-glycero-3-phosphate + an acyl-CoA = a 1,2-diacyl-sn-glycero-3-phosphate + CoA. It functions in the pathway phospholipid metabolism; CDP-diacylglycerol biosynthesis; CDP-diacylglycerol from sn-glycerol 3-phosphate: step 2/3. In terms of biological role, converts lysophosphatidic acid (LPA) into phosphatidic acid by incorporating acyl moiety at the 2 position. Has preference for C-18-CoA substrates compared to C-16-CoA substrates. In Arabidopsis thaliana (Mouse-ear cress), this protein is 1-acyl-sn-glycerol-3-phosphate acyltransferase 3 (LPAT3).